We begin with the raw amino-acid sequence, 300 residues long: Serine/arginine-rich splicing factor SR34A (300 aa).

The region spanning 7–82 (RSIYVGNLPG…CRLRVELAHG (76 aa)) is the RRM 1 domain. Disordered stretches follow at residues 81–110 (HGGR…GGGG) and 198–300 (YESS…EGSV). Gly residues predominate over residues 94–110 (GYGGGGSGYGGGGGGGG). The RRM 2 domain maps to 122–200 (FRVIVRGLPS…GFIRVKKYES (79 aa)). The segment covering 203–239 (SRSRSPSRSRSRSRSRSRSRGRGRSHSRSRSLSRSKS) has biased composition (basic residues). Phosphoserine is present on residues serine 207, serine 209, serine 231, serine 233, serine 239, serine 259, serine 275, and serine 285. Residues 253 to 262 (SRSISKSRSP) are compositionally biased toward low complexity. A compositionally biased stretch (basic residues) spans 275–287 (SRSKSRSRSRSRS).

Belongs to the splicing factor SR family. SR subfamily. In terms of assembly, component of the spliceosome.

Its subcellular location is the nucleus speckle. The protein localises to the nucleus. The protein resides in the nucleoplasm. Its function is as follows. Probably involved in intron recognition and spliceosome assembly. This chain is Serine/arginine-rich splicing factor SR34A (SR34A), found in Arabidopsis thaliana (Mouse-ear cress).